Here is a 304-residue protein sequence, read N- to C-terminus: UDP-3-O-acyl-N-acetylglucosamine deacetylase (304 aa).

Positions 78, 235, and 239 each coordinate Zn(2+). Residue His262 is the Proton donor of the active site.

The protein belongs to the LpxC family. Zn(2+) serves as cofactor.

It carries out the reaction a UDP-3-O-[(3R)-3-hydroxyacyl]-N-acetyl-alpha-D-glucosamine + H2O = a UDP-3-O-[(3R)-3-hydroxyacyl]-alpha-D-glucosamine + acetate. It functions in the pathway glycolipid biosynthesis; lipid IV(A) biosynthesis; lipid IV(A) from (3R)-3-hydroxytetradecanoyl-[acyl-carrier-protein] and UDP-N-acetyl-alpha-D-glucosamine: step 2/6. Catalyzes the hydrolysis of UDP-3-O-myristoyl-N-acetylglucosamine to form UDP-3-O-myristoylglucosamine and acetate, the committed step in lipid A biosynthesis. The sequence is that of UDP-3-O-acyl-N-acetylglucosamine deacetylase from Anaeromyxobacter sp. (strain Fw109-5).